The following is a 194-amino-acid chain: dTTP/UTP pyrophosphatase (194 aa).

Asp66 serves as the catalytic Proton acceptor.

The protein belongs to the Maf family. YhdE subfamily. It depends on a divalent metal cation as a cofactor.

The protein localises to the cytoplasm. It catalyses the reaction dTTP + H2O = dTMP + diphosphate + H(+). The enzyme catalyses UTP + H2O = UMP + diphosphate + H(+). Nucleoside triphosphate pyrophosphatase that hydrolyzes dTTP and UTP. May have a dual role in cell division arrest and in preventing the incorporation of modified nucleotides into cellular nucleic acids. The polypeptide is dTTP/UTP pyrophosphatase (Anaeromyxobacter dehalogenans (strain 2CP-C)).